The primary structure comprises 118 residues: uncharacterized protein (118 aa).

The first 26 residues, 1–26 (MTKLKMLSMLTVMIASLFIFSSQALA), serve as a signal peptide directing secretion. Residues 30-104 (FTVSTSSGAP…VNIGYVSDTY (75 aa)) enclose the SH3b domain.

It to B.subtilis YraI.

This is an uncharacterized protein from Bacillus subtilis (strain 168).